Reading from the N-terminus, the 1466-residue chain is ABC transporter G family member 40 (1466 aa).

Positions 1 to 21 are disordered; it reads MSHRHHAALVASASGRSPSWG. Positions 176–449 constitute an ABC transporter 1 domain; the sequence is GLIGQFGSSN…FEASGFRCPQ (274 aa). Residue 209–216 coordinates ATP; it reads GPPSSGKS. An ABC transmembrane type-2 1 domain is found at 527–740; it reads ESLKAVLCRE…SQNAISINEF (214 aa). Transmembrane regions (helical) follow at residues 545-565, 581-601, 633-653, 664-684, 690-710, and 776-796; these read FLYIFKVTQLIILAFLSMTVF, FLGALTFNLITVMFNGLSELN, VPVSLVEATVWVVITYYVMGF, FLAFFVTHLMAMALFRFLGAI, IAISFGMLVLLIVFVFGGFVI, and FWLSIGALVGFIILFNTLYIL. Positions 821–831 are enriched in basic and acidic residues; it reads YTETRNEEHRS. Positions 821-851 are disordered; sequence YTETRNEEHRSRTSTTTSSIPTSANGEGNRP. The span at 833-843 shows a compositional bias: low complexity; that stretch reads TSTTTSSIPTS. The region spanning 865-1117 is the ABC transporter 2 domain; it reads LCFNHLNYYV…KLVEYFETIL (253 aa). 910–917 provides a ligand contact to ATP; the sequence is GVSGAGKT. Positions 1190-1404 constitute an ABC transmembrane type-2 2 domain; that stretch reads IQCVANLWKQ…TIYGVIASQF (215 aa). The next 7 helical transmembrane spans lie at 1209–1229, 1241–1261, 1297–1317, 1327–1347, 1355–1375, 1396–1416, and 1435–1455; these read YNSLRYLTTFLYGLFFGTVFW, LYNLLGATYAAIFFIGATNCM, FIYNIIQGILYTVIIYAMIGY, FLFFIVSSFNYFTFFGMMLVA, ANILITFALPLWNLFAGFLIF, IYGVIASQFGGNGGSISVPGG, and FLGYVILAHFGFMAAFVLIFG.

This sequence belongs to the ABC transporter superfamily. ABCG family. PDR (TC 3.A.1.205) subfamily.

The protein localises to the membrane. This Oryza sativa subsp. japonica (Rice) protein is ABC transporter G family member 40.